A 158-amino-acid polypeptide reads, in one-letter code: Small ribosomal subunit protein uS17 (158 aa).

A2 is modified (N-acetylalanine). R22 is subject to Citrulline. 3 positions are modified to N6-acetyllysine: K38, K45, and K58. The S-palmitoyl cysteine moiety is linked to residue C60. At S67 the chain carries Phosphoserine. An Omega-N-methylarginine modification is found at R69. A Phosphoserine modification is found at S110.

It belongs to the universal ribosomal protein uS17 family. Component of the small ribosomal subunit. Part of the small subunit (SSU) processome, composed of more than 70 proteins and the RNA chaperone small nucleolar RNA (snoRNA) U3. In terms of processing, citrullinated by PADI4.

Its subcellular location is the cytoplasm. The protein resides in the nucleus. It is found in the nucleolus. Component of the small ribosomal subunit. The ribosome is a large ribonucleoprotein complex responsible for the synthesis of proteins in the cell. Part of the small subunit (SSU) processome, first precursor of the small eukaryotic ribosomal subunit. During the assembly of the SSU processome in the nucleolus, many ribosome biogenesis factors, an RNA chaperone and ribosomal proteins associate with the nascent pre-rRNA and work in concert to generate RNA folding, modifications, rearrangements and cleavage as well as targeted degradation of pre-ribosomal RNA by the RNA exosome. The sequence is that of Small ribosomal subunit protein uS17 (Rps11) from Mus musculus (Mouse).